We begin with the raw amino-acid sequence, 374 residues long: dTDP-3-amino-3,4,6-trideoxy-alpha-D-glucose transaminase (374 aa).

Pyridoxal 5'-phosphate-binding positions include Gly-60, Gln-160, 181–186, Tyr-214, Tyr-221, 229–231, and Tyr-316; these read SFYPTK and NSR. Position 186 is an N6-(pyridoxal phosphate)lysine (Lys-186).

Belongs to the degT/dnrJ/eryC1 family. The cofactor is pyridoxal 5'-phosphate.

The enzyme catalyses dTDP-3-amino-3,4,6-trideoxy-alpha-D-glucose + 2-oxoglutarate = dTDP-3-dehydro-4,6-dideoxy-alpha-D-glucose + L-glutamate. It participates in antibiotic biosynthesis. Involved in the biosynthesis of the amino sugar dTDP-L-megosamine which is found in the macrolide antibiotic and antiparasitic megalomicin A. Catalyzes the reversible transfer of the amino group from L-glutamate to the C-3 position of dTDP-3-keto-4,6-deoxyglucose to yield dTDP-3-amino-3,4,6-trideoxyglucose. The protein is dTDP-3-amino-3,4,6-trideoxy-alpha-D-glucose transaminase of Micromonospora megalomicea subsp. nigra.